The following is a 477-amino-acid chain: V-type ATP synthase beta chain (477 aa).

Belongs to the ATPase alpha/beta chains family.

Functionally, produces ATP from ADP in the presence of a proton gradient across the membrane. The V-type beta chain is a regulatory subunit. The sequence is that of V-type ATP synthase beta chain from Anaeromyxobacter sp. (strain K).